The primary structure comprises 782 residues: Probable transcription factor claV (782 aa).

Disordered regions lie at residues 1-37 (MPPRPNKRQQREQEELESLGGPSHEGEVSSEDEVAKR), 49-128 (ALLT…GKDE), 156-180 (KSTSAGASGSSSRRKPGVLRSNLTH), 717-745 (AGVGAGADEDDEVEDDDEDEDEEVAPMPV), and 758-782 (GNTVAEDSSDDEGDRPPPVDDGGVD). Residues 70-79 (RKTKKKKKKG) are compositionally biased toward basic residues. The segment covering 86 to 102 (QTPVMTEPPQSSRTSPN) has biased composition (polar residues). Residues 157 to 166 (STSAGASGSS) show a composition bias toward low complexity. Residues 723–740 (ADEDDEVEDDDEDEDEEV) are compositionally biased toward acidic residues.

It localises to the nucleus. It functions in the pathway secondary metabolite biosynthesis; terpenoid biosynthesis. Its function is as follows. Probable transcription factor; part of the gene cluster that mediates the biosynthesis of clavilactone A, a meroterpenoid that features a unique benzo-fused ten-membered carbocyclic ring unit with an alpha,beta-epoxy-gamma-lactone moiety, forming an intriguing 10/5/3 tricyclic nested skeleton. The chain is Probable transcription factor claV from Ampulloclitocybe clavipes (Club foot).